We begin with the raw amino-acid sequence, 515 residues long: Sodium/hydrogen exchanger 9B1 (515 aa).

A compositionally biased stretch (basic and acidic residues) spans 1 to 10; sequence MHTTESKNEH. The segment at 1-32 is disordered; that stretch reads MHTTESKNEHLEDENFQTSTTPQSLIDPNNTA. Residues 16-32 show a composition bias toward polar residues; the sequence is FQTSTTPQSLIDPNNTA. 13 helical membrane passes run 66–86, 95–115, 116–136, 152–172, 187–207, 215–235, 260–280, 284–304, 337–357, 368–388, 407–427, 431–451, and 472–492; these read VIIT…SILG, LFGL…LQLI, RIPL…GFTI, WSSI…GLGL, LAVG…HFIM, FLLG…YMMV, ILAI…GGIL, IASI…GFFV, IGLH…AGTK, IITT…GAEV, LALC…GFSF, IFIA…GPLA, and VAFL…GILG.

Belongs to the monovalent cation:proton antiporter 1 (CPA1) transporter (TC 2.A.36) family. Expressed only in the testis.

Its subcellular location is the cell projection. It localises to the cilium. It is found in the flagellum membrane. Sperm-specific Na(+)/H(+) exchanger involved in intracellular pH regulation of spermatozoa. Involved in sperm motility and fertility. The polypeptide is Sodium/hydrogen exchanger 9B1 (Homo sapiens (Human)).